Here is a 150-residue protein sequence, read N- to C-terminus: Large ribosomal subunit protein bL9 (150 aa).

Belongs to the bacterial ribosomal protein bL9 family.

Its function is as follows. Binds to the 23S rRNA. In Moorella thermoacetica (strain ATCC 39073 / JCM 9320), this protein is Large ribosomal subunit protein bL9.